Consider the following 308-residue polypeptide: uncharacterized protein (308 aa).

The interval 158-221 is disordered; that stretch reads GDSNAETFEE…DSINHGESSE (64 aa). Positions 206-221 are enriched in basic and acidic residues; the sequence is RNGDRSDSINHGESSE.

This is an uncharacterized protein from Arabidopsis thaliana (Mouse-ear cress).